Consider the following 419-residue polypeptide: Gamma-glutamyl phosphate reductase (419 aa).

The protein belongs to the gamma-glutamyl phosphate reductase family.

The protein resides in the cytoplasm. The enzyme catalyses L-glutamate 5-semialdehyde + phosphate + NADP(+) = L-glutamyl 5-phosphate + NADPH + H(+). It participates in amino-acid biosynthesis; L-proline biosynthesis; L-glutamate 5-semialdehyde from L-glutamate: step 2/2. In terms of biological role, catalyzes the NADPH-dependent reduction of L-glutamate 5-phosphate into L-glutamate 5-semialdehyde and phosphate. The product spontaneously undergoes cyclization to form 1-pyrroline-5-carboxylate. In Yersinia enterocolitica serotype O:8 / biotype 1B (strain NCTC 13174 / 8081), this protein is Gamma-glutamyl phosphate reductase.